The following is a 187-amino-acid chain: 1,6-anhydro-N-acetylmuramyl-L-alanine amidase AmpD (187 aa).

Positions 30–167 (LLVVHNISLP…APERKTDPGP (138 aa)) constitute an N-acetylmuramoyl-L-alanine amidase domain. His34 contacts Zn(2+). Glu116 (proton acceptor) is an active-site residue. The Zn(2+) site is built by His154 and Asp164.

This sequence belongs to the N-acetylmuramoyl-L-alanine amidase 2 family. The cofactor is Zn(2+).

It is found in the cytoplasm. It catalyses the reaction Hydrolyzes the link between N-acetylmuramoyl residues and L-amino acid residues in certain cell-wall glycopeptides.. Its activity is regulated as follows. Amidase activity is inhibited by metal chelators such as EDTA, dipicolinic acid or 1,10-phenanthroline. Functionally, involved in cell wall peptidoglycan recycling. Specifically cleaves the amide bond between the lactyl group of N-acetylmuramic acid and the alpha-amino group of the L-alanine in degradation products containing an anhydro N-acetylmuramyl moiety. Is also involved in beta-lactamase induction. This is 1,6-anhydro-N-acetylmuramyl-L-alanine amidase AmpD from Citrobacter freundii.